We begin with the raw amino-acid sequence, 173 residues long: MKRLSLAMVTLLACAGAQAASEKVEMNLVTAQGVGQSIGTVVIDETEGGLKFTPHLKALPPGEHGFHIHANGSCQPAIKDGKAVAAEAAGGHLDPQNTGKHEGPEGQGHLGDLPVLVVNNDGIASEPVTAPRLKSLDEVKDKALMIHVGGDNMSDQPKPLGGGGMRYACGVIK.

A signal peptide spans Met-1 to Ala-19. Positions 67, 69, and 92 each coordinate Cu cation. Cys-74 and Cys-169 are joined by a disulfide. Residues His-92, His-101, His-109, and Asp-112 each contribute to the Zn(2+) site. His-147 is a Cu cation binding site.

The protein belongs to the Cu-Zn superoxide dismutase family. Monomer. The cofactor is Cu cation. Zn(2+) serves as cofactor.

It is found in the periplasm. The catalysed reaction is 2 superoxide + 2 H(+) = H2O2 + O2. Destroys radicals which are normally produced within the cells and which are toxic to biological systems. The sequence is that of Superoxide dismutase [Cu-Zn] 2 (sodC) from Salmonella typhimurium (strain LT2 / SGSC1412 / ATCC 700720).